A 381-amino-acid chain; its full sequence is tRNA-specific 2-thiouridylase MnmA (381 aa).

Residues 26 to 33 and leucine 52 each bind ATP; that span reads AMSGGVDS. Cysteine 120 acts as the Nucleophile in catalysis. A disulfide bridge connects residues cysteine 120 and cysteine 217. Glycine 144 contributes to the ATP binding site. The interval 166 to 168 is interaction with tRNA; sequence RDQ. Residue cysteine 217 is the Cysteine persulfide intermediate of the active site.

It belongs to the MnmA/TRMU family.

Its subcellular location is the cytoplasm. It carries out the reaction S-sulfanyl-L-cysteinyl-[protein] + uridine(34) in tRNA + AH2 + ATP = 2-thiouridine(34) in tRNA + L-cysteinyl-[protein] + A + AMP + diphosphate + H(+). Catalyzes the 2-thiolation of uridine at the wobble position (U34) of tRNA, leading to the formation of s(2)U34. This chain is tRNA-specific 2-thiouridylase MnmA, found in Ruegeria sp. (strain TM1040) (Silicibacter sp.).